An 809-amino-acid polypeptide reads, in one-letter code: Origin of replication complex subunit 1A (809 aa).

Residues 1 to 47 are compositionally biased toward low complexity; sequence MASSLSSKAKTFKSPTKTPTKMYRKSYLSPSSTSLTPPQTPETLTPL. Residues 1–69 form a disordered region; it reads MASSLSSKAK…LGNDPIDLPG (69 aa). The histone H3 binding stretch occupies residues 160–185; sequence DPEIEDCQICFKSHTNTIMIECDDCL. The PHD-type zinc finger occupies 163–213; the sequence is IEDCQICFKSHTNTIMIECDDCLGGFHLNCLKPPLKEVPEGDWICQFCEVK. The Zn(2+) site is built by Cys166, Cys169, Cys181, Cys184, His189, and Cys192. The interval 201–205 is histone H3 binding; the sequence is PEGDW. Residues Cys207 and Cys210 each coordinate Zn(2+). The 119-residue stretch at 223-341 folds into the BAH domain; sequence PKPPEGKKLA…VHWGSFKRVA (119 aa). Positions 316–321 are histone H3 binding; that stretch reads ASNDGD. The interval 431 to 799 is necessary and sufficient for ORC complex assembly; the sequence is PKSLPCRSKE…DDVAFALKDN (369 aa). Residues 466 to 473 and 466 to 474 contribute to the ATP site; these read GVPGTGKT and GVPGTGKTI. Mg(2+) contacts are provided by Asp556 and Glu557. Positions 557, 590, and 655 each coordinate ATP.

It belongs to the ORC1 family. As to quaternary structure, component of the origin recognition complex (ORC) composed of at least ORC1 (ORC1A or ORC1B), ORC2, ORC3, ORC4, ORC5 and ORC6. ORC is regulated in a cell-cycle and development dependent manner. It is sequentially assembled at the exit from anaphase of mitosis and disassembled as cells enter S phase. Interacts directly with ORC2, ORC3, ORC4 and ORC5. Binds mostly unmodified histone H3, and, with lower efficiency, H3K4me1 H3K4me2 and H3K4me3. Follow a cell-cycle regulation with a peak at the G1/S-phase. Mostly expressed in siliques, flowers and flower buds, and, to a lower extent, in roots, leaves and stems.

The protein localises to the nucleus. Essential protein. Component of the origin recognition complex (ORC) that binds origins of replication. It has a role in both chromosomal replication and mating type transcriptional silencing. Binds to the ARS consensus sequence (ACS) of origins of replication. H3K4me3 effector that positively regulates the transcription of a subset of genes. The sequence is that of Origin of replication complex subunit 1A from Arabidopsis thaliana (Mouse-ear cress).